The sequence spans 148 residues: FAD synthase (148 aa).

Residues 9–10 (TF), 14–17 (HPGH), Asn92, and Tyr119 each bind ATP.

It belongs to the archaeal FAD synthase family. Homodimer. A divalent metal cation serves as cofactor.

The enzyme catalyses FMN + ATP + H(+) = FAD + diphosphate. It participates in cofactor biosynthesis; FAD biosynthesis; FAD from FMN: step 1/1. In terms of biological role, catalyzes the transfer of the AMP portion of ATP to flavin mononucleotide (FMN) to produce flavin adenine dinucleotide (FAD) coenzyme. This is FAD synthase from Methanolacinia petrolearia (strain DSM 11571 / OCM 486 / SEBR 4847) (Methanoplanus petrolearius).